A 126-amino-acid chain; its full sequence is B3 domain-containing protein At5g54067 (126 aa).

The segment at residues 20 to 118 is a DNA-binding region (TF-B3); sequence SDIVGNVVLP…KFVVLNFQYS (99 aa).

Its subcellular location is the nucleus. The protein is B3 domain-containing protein At5g54067 of Arabidopsis thaliana (Mouse-ear cress).